The primary structure comprises 178 residues: Tetratricopeptide repeat protein 9C (178 aa).

3 TPR repeats span residues Ala15 to Leu48, Ala79 to Asn114, and Val115 to Asp148.

It belongs to the TTC9 family.

The polypeptide is Tetratricopeptide repeat protein 9C (ttc9c) (Xenopus tropicalis (Western clawed frog)).